Consider the following 363-residue polypeptide: 1-aminocyclopropane-1-carboxylate oxidase homolog (363 aa).

The 101-residue stretch at 212–312 (FHLFCSCNYY…MSITCFFGES (101 aa)) folds into the Fe2OG dioxygenase domain. Residues His-236, Asp-238, and His-292 each contribute to the Fe cation site.

This sequence belongs to the iron/ascorbate-dependent oxidoreductase family.

The chain is 1-aminocyclopropane-1-carboxylate oxidase homolog (ACO3) from Solanum lycopersicum (Tomato).